The primary structure comprises 84 residues: U4-theraphotoxin-Hhn1a (84 aa).

The N-terminal stretch at 1–22 is a signal peptide; the sequence is MKVTLIAILTRAAVLVLHTTAA. A propeptide spanning residues 23-47 is cleaved from the precursor; it reads EELEESQLMEVSMPDTELAAVDEER. Intrachain disulfides connect C51–C65, C55–C76, and C70–C81.

It belongs to the neurotoxin 12 (Hwtx-2) family. 02 (Hwtx-2) subfamily. In terms of tissue distribution, expressed by the venom gland.

It localises to the secreted. Its function is as follows. Postsynaptic neurotoxin. This Cyriopagopus hainanus (Chinese bird spider) protein is U4-theraphotoxin-Hhn1a.